A 288-amino-acid chain; its full sequence is Putative hydrolase LipZ (288 aa).

The protein belongs to the AB hydrolase superfamily.

The protein is Putative hydrolase LipZ of Mycobacterium tuberculosis (strain CDC 1551 / Oshkosh).